A 229-amino-acid chain; its full sequence is Uracil-DNA glycosylase (229 aa).

The Proton acceptor role is filled by aspartate 64.

Belongs to the uracil-DNA glycosylase (UDG) superfamily. UNG family.

The protein localises to the cytoplasm. It carries out the reaction Hydrolyzes single-stranded DNA or mismatched double-stranded DNA and polynucleotides, releasing free uracil.. Functionally, excises uracil residues from the DNA which can arise as a result of misincorporation of dUMP residues by DNA polymerase or due to deamination of cytosine. This is Uracil-DNA glycosylase from Escherichia coli (strain 55989 / EAEC).